Consider the following 236-residue polypeptide: 3-deoxy-D-manno-octulosonic acid kinase (236 aa).

The active site involves aspartate 167.

It belongs to the protein kinase superfamily. KdkA/RfaP family.

Its subcellular location is the cell inner membrane. It carries out the reaction an alpha-Kdo-(2-&gt;6)-lipid IVA + ATP = a 4-O-phospho-alpha-Kdo-(2-&gt;6)-lipid IVA + ADP + H(+). It functions in the pathway bacterial outer membrane biogenesis; LPS core biosynthesis. Catalyzes the ATP-dependent phosphorylation of the 3-deoxy-D-manno-octulosonic acid (Kdo) residue in Kdo-lipid IV(A) at the 4-OH position. This Vibrio vulnificus (strain CMCP6) protein is 3-deoxy-D-manno-octulosonic acid kinase.